Here is a 476-residue protein sequence, read N- to C-terminus: Bifunctional protein HldE (476 aa).

Residues 1–318 form a ribokinase region; sequence MKVTLPDFRR…ENAIRGRAET (318 aa). Residue 195-198 coordinates ATP; that stretch reads NLSE. Asp264 is a catalytic residue. A cytidylyltransferase region spans residues 344–476; it reads MTNGIFDILH…IIQSIKNGRG (133 aa).

This sequence in the N-terminal section; belongs to the carbohydrate kinase PfkB family. The protein in the C-terminal section; belongs to the cytidylyltransferase family. In terms of assembly, homodimer.

The enzyme catalyses D-glycero-beta-D-manno-heptose 7-phosphate + ATP = D-glycero-beta-D-manno-heptose 1,7-bisphosphate + ADP + H(+). It catalyses the reaction D-glycero-beta-D-manno-heptose 1-phosphate + ATP + H(+) = ADP-D-glycero-beta-D-manno-heptose + diphosphate. It functions in the pathway nucleotide-sugar biosynthesis; ADP-L-glycero-beta-D-manno-heptose biosynthesis; ADP-L-glycero-beta-D-manno-heptose from D-glycero-beta-D-manno-heptose 7-phosphate: step 1/4. Its pathway is nucleotide-sugar biosynthesis; ADP-L-glycero-beta-D-manno-heptose biosynthesis; ADP-L-glycero-beta-D-manno-heptose from D-glycero-beta-D-manno-heptose 7-phosphate: step 3/4. In terms of biological role, catalyzes the phosphorylation of D-glycero-D-manno-heptose 7-phosphate at the C-1 position to selectively form D-glycero-beta-D-manno-heptose-1,7-bisphosphate. Its function is as follows. Catalyzes the ADP transfer from ATP to D-glycero-beta-D-manno-heptose 1-phosphate, yielding ADP-D-glycero-beta-D-manno-heptose. The chain is Bifunctional protein HldE from Yersinia pseudotuberculosis serotype O:1b (strain IP 31758).